Reading from the N-terminus, the 176-residue chain is Inner membrane-spanning protein YciB (176 aa).

6 helical membrane-spanning segments follow: residues 3-23 (FLFDLFPIILFFVAFKVWGIF), 24-44 (TATAVAIVATLAQVAWVAFRH), 49-69 (TMLWVSLGVIVVFGGATLVLH), 72-92 (KFIQWKPTVLYWLFAIGLLAA), 121-141 (LAWALFFAVLGVANLYVVHNF), and 149-169 (FKLFGTTGAMVVFIILQSLWL).

Belongs to the YciB family.

It is found in the cell inner membrane. In terms of biological role, plays a role in cell envelope biogenesis, maintenance of cell envelope integrity and membrane homeostasis. This chain is Inner membrane-spanning protein YciB, found in Burkholderia cenocepacia (strain ATCC BAA-245 / DSM 16553 / LMG 16656 / NCTC 13227 / J2315 / CF5610) (Burkholderia cepacia (strain J2315)).